The following is a 73-amino-acid chain: Ocellatin-PT6 (73 aa).

The N-terminal stretch at 1–22 (MAFLKKSLFLVLFLGLVSLSIC) is a signal peptide. The propeptide occupies 23-39 (DEEKRQDEDDDDDDDEE).

In terms of tissue distribution, expressed by the skin glands.

The protein localises to the secreted. Functionally, has antibacterial activity against Gram-negative bacterium E.coli ATCC 25922 (MIC=120 uM) but not against S.pneumoniae ATCC 700603, S.choleraesuis ATCC 14028 or against Gram-positive bacterium S.aureus ATCC 29313. Shows no hemolytic activity and no cytotoxicity. This is Ocellatin-PT6 from Leptodactylus pustulatus (Ceara white-lipped frog).